Consider the following 195-residue polypeptide: Large ribosomal subunit protein uL5 (195 aa).

The protein belongs to the universal ribosomal protein uL5 family. Part of the 50S ribosomal subunit; part of the 5S rRNA/L5/L18/L25 subcomplex. Contacts the 5S rRNA and the P site tRNA. Forms a bridge to the 30S subunit in the 70S ribosome.

Functionally, this is one of the proteins that bind and probably mediate the attachment of the 5S RNA into the large ribosomal subunit, where it forms part of the central protuberance. In the 70S ribosome it contacts protein S13 of the 30S subunit (bridge B1b), connecting the 2 subunits; this bridge is implicated in subunit movement. Contacts the P site tRNA; the 5S rRNA and some of its associated proteins might help stabilize positioning of ribosome-bound tRNAs. The protein is Large ribosomal subunit protein uL5 of Chlorobium chlorochromatii (strain CaD3).